The chain runs to 663 residues: COBRA-like protein 9 (663 aa).

The first 23 residues, 1–23 (MGVLLPIFFGVLLLFTVTPPSMS), serve as a signal peptide directing secretion. 13 N-linked (GlcNAc...) asparagine glycosylation sites follow: Asn63, Asn111, Asn121, Asn169, Asn203, Asn326, Asn355, Asn397, Asn409, Asn429, Asn470, Asn550, and Asn561. Ser638 carries GPI-anchor amidated serine lipidation. Residues 639–663 (GGRRNGAITVLSFITFYVAAFMVLL) constitute a propeptide, removed in mature form.

Belongs to the COBRA family. As to expression, expressed only in flowers.

It is found in the cell membrane. The protein is COBRA-like protein 9 (COBL9) of Arabidopsis thaliana (Mouse-ear cress).